Consider the following 183-residue polypeptide: uncharacterized protein (183 aa).

This is an uncharacterized protein from Bacillus subtilis (strain 168).